Reading from the N-terminus, the 113-residue chain is U11-theraphotoxin-Hhn1m (113 aa).

An N-terminal signal peptide occupies residues 1–21 (MNTVRGTFLLVFGLAASLGQA). Positions 22-74 (DKNENRREMQKKTEQGKSYLNFAENLLLQKLEELEAKLLEKHSKKSKNSRQKR) are excised as a propeptide. Cystine bridges form between Cys75-Cys90, Cys82-Cys95, and Cys89-Cys110.

The protein belongs to the neurotoxin 14 (magi-1) family. 01 (HNTX-16) subfamily. In terms of tissue distribution, expressed by the venom gland.

Its subcellular location is the secreted. In terms of biological role, probable ion channel inhibitor. The protein is U11-theraphotoxin-Hhn1m of Cyriopagopus hainanus (Chinese bird spider).